The chain runs to 315 residues: Protein OPG185 (315 aa).

The signal sequence occupies residues 1 to 16 (MTRLPILLLLISLVYA). Residues 17–121 (TPFPQTSKKI…NDTDKVDYEE (105 aa)) form the Ig-like V-type domain. Topologically, residues 17 to 279 (TPFPQTSKKI…SNYKTKDFVE (263 aa)) are virion surface. A disulfide bridge connects residues cysteine 34 and cysteine 103. N-linked (GlcNAc...) asparagine; by host glycosylation is found at asparagine 37, asparagine 69, asparagine 112, and asparagine 161. The interval 194 to 213 (TVSATSGESTTDETPEPITD) is disordered. Residue asparagine 254 is glycosylated (N-linked (GlcNAc...) asparagine; by host). The chain crosses the membrane as a helical span at residues 280-303 (IFGITALIILSAVAIFCITYYICN). Residues 304–315 (KRSRKYKTENKV) lie on the Intravirion side of the membrane.

Belongs to the orthopoxvirus OPG185 family. In terms of assembly, heterodimerizes with OPG040. The heterodimer OPG185-OPG040 interacts with components of the entry fusion complex OPG143 and OPG094. Heterodimer with C3/VPC protein; disulfide-linked. Glycosylated; contains phosphate and sulfate-substituted glycans. O-glycosylation is required for hemagglutination and hemadsorption activities of infected cell membranes.

Its subcellular location is the virion membrane. It is found in the host membrane. Its function is as follows. Prevents cell to cell fusion by interacting with and directing the viral OPG040 protein on the host plasma membrane. The OPG185-OPG040 complex associates with components of the entry fusion complex (EFC) presumably to avoid superinfection and syncytium formation. Via its interaction with C3/VCP protein, protects the infected cell and probably also the extracellular enveloped virus from complement attack. The polypeptide is Protein OPG185 (OPG185) (Vaccinia virus (strain Copenhagen) (VACV)).